A 78-amino-acid polypeptide reads, in one-letter code: Metallothionein-like protein type 2 (78 aa).

Belongs to the metallothionein superfamily. Type 15 family.

In terms of biological role, metallothioneins have a high content of cysteine residues that bind various heavy metals. This chain is Metallothionein-like protein type 2, found in Musa acuminata (Banana).